The primary structure comprises 167 residues: Ureidoglycolate lyase (167 aa).

This sequence belongs to the ureidoglycolate lyase family. As to quaternary structure, homodimer. Requires Ni(2+) as cofactor.

The enzyme catalyses (S)-ureidoglycolate = urea + glyoxylate. Its pathway is nitrogen metabolism; (S)-allantoin degradation. Catalyzes the catabolism of the allantoin degradation intermediate (S)-ureidoglycolate, generating urea and glyoxylate. Involved in the utilization of allantoin as nitrogen source. This Pseudomonas putida (strain W619) protein is Ureidoglycolate lyase.